Consider the following 397-residue polypeptide: Elongation factor Tu 1 (397 aa).

Positions 10-207 (KPHVNVGTIG…TLDSYIPEPV (198 aa)) constitute a tr-type G domain. The interval 19–26 (GHVDHGKT) is G1. 19 to 26 (GHVDHGKT) is a binding site for GTP. Residue Thr26 coordinates Mg(2+). Residues 60–64 (GITIN) are G2. Positions 81–84 (DCPG) are G3. GTP is bound by residues 81–85 (DCPGH) and 136–139 (NKAD). A G4 region spans residues 136 to 139 (NKAD). Positions 174 to 176 (SAL) are G5.

Belongs to the TRAFAC class translation factor GTPase superfamily. Classic translation factor GTPase family. EF-Tu/EF-1A subfamily. Monomer.

Its subcellular location is the cytoplasm. The catalysed reaction is GTP + H2O = GDP + phosphate + H(+). GTP hydrolase that promotes the GTP-dependent binding of aminoacyl-tRNA to the A-site of ribosomes during protein biosynthesis. The chain is Elongation factor Tu 1 from Stutzerimonas stutzeri (strain A1501) (Pseudomonas stutzeri).